We begin with the raw amino-acid sequence, 150 residues long: Anthrone oxygenase gedH (150 aa).

Helical transmembrane passes span 1 to 21, 41 to 61, 73 to 93, and 128 to 148; these read MANP…PVFL, GHKL…WVAA, PVLA…CMVS, and LFPL…LVGG.

It belongs to the anthrone oxygenase family.

The protein localises to the membrane. The enzyme catalyses emodin anthrone + O2 = emodin + H2O + H(+). Its pathway is secondary metabolite biosynthesis. Its function is as follows. Anthrone oxygenase; part of the gene cluster that mediates the biosynthesis of geodin, an intermediate in the biosynthesis of other natural products. The pathway begins with the synthesis of atrochrysone thioester by the polyketide synthase (PKS) gedC. The atrochrysone carboxyl ACP thioesterase gedB then breaks the thioester bond and releases the atrochrysone carboxylic acid from gedC. The atrochrysone carboxylic acid is then converted to atrochrysone which is further transformed into emodin anthrone. The next step is performed by the emodin anthrone oxygenase gedH that catalyzes the oxidation of emodinanthrone to emodin. Emodin O-methyltransferase encoded probably by gedA then catalyzes methylation of the 8-hydroxy group of emodin to form questin. Ring cleavage of questin by questin oxidase gedK leads to desmethylsulochrin via several intermediates including questin epoxide. Another methylation step probably catalyzed by methyltransferase gedG leads to the formation of sulochrin which is further converted to dihydrogeodin by the sulochrin halogenase gedL. Finally, the dihydrogeodin oxidase gedJ catalyzes the stereospecific phenol oxidative coupling reaction converting dihydrogeodin to geodin. This chain is Anthrone oxygenase gedH, found in Aspergillus terreus (strain NIH 2624 / FGSC A1156).